A 560-amino-acid polypeptide reads, in one-letter code: Eukaryotic translation initiation factor 3 subunit D-1 (560 aa).

The segment at 98–166 (VQKPPHQRGR…RGPPPKMRES (69 aa)) is disordered. A compositionally biased stretch (basic residues) spans 100–121 (KPPHQRGRFRNMRNSRSGRGRN). Thr128 carries the post-translational modification Phosphothreonine. Basic residues predominate over residues 147-156 (GRGMGKKFGH). The interval 291-305 (EFDLLTVNESSVEPP) is RNA gate.

Belongs to the eIF-3 subunit D family. Component of the eukaryotic translation initiation factor 3 (eIF-3) complex. The eIF-3 complex interacts with pix.

The protein localises to the cytoplasm. Its function is as follows. mRNA cap-binding component of the eukaryotic translation initiation factor 3 (eIF-3) complex, which is involved in protein synthesis of a specialized repertoire of mRNAs and, together with other initiation factors, stimulates binding of mRNA and methionyl-tRNAi to the 40S ribosome. The eIF-3 complex specifically targets and initiates translation of a subset of mRNAs involved in cell proliferation. In the eIF-3 complex, eif3d specifically recognizes and binds the 7-methylguanosine cap of a subset of mRNAs. The sequence is that of Eukaryotic translation initiation factor 3 subunit D-1 from Drosophila melanogaster (Fruit fly).